A 161-amino-acid polypeptide reads, in one-letter code: SsrA-binding protein (161 aa).

Positions 138–161 (DKRTDSKEKDWNRDKARIMKSSLR) are disordered. The segment covering 139–154 (KRTDSKEKDWNRDKAR) has biased composition (basic and acidic residues).

This sequence belongs to the SmpB family.

It is found in the cytoplasm. Its function is as follows. Required for rescue of stalled ribosomes mediated by trans-translation. Binds to transfer-messenger RNA (tmRNA), required for stable association of tmRNA with ribosomes. tmRNA and SmpB together mimic tRNA shape, replacing the anticodon stem-loop with SmpB. tmRNA is encoded by the ssrA gene; the 2 termini fold to resemble tRNA(Ala) and it encodes a 'tag peptide', a short internal open reading frame. During trans-translation Ala-aminoacylated tmRNA acts like a tRNA, entering the A-site of stalled ribosomes, displacing the stalled mRNA. The ribosome then switches to translate the ORF on the tmRNA; the nascent peptide is terminated with the 'tag peptide' encoded by the tmRNA and targeted for degradation. The ribosome is freed to recommence translation, which seems to be the essential function of trans-translation. This chain is SsrA-binding protein, found in Aliivibrio fischeri (strain ATCC 700601 / ES114) (Vibrio fischeri).